A 337-amino-acid chain; its full sequence is 25S rRNA (adenine(2142)-N(1))-methyltransferase (337 aa).

Residues Gly180 and Asp201 each contribute to the S-adenosyl-L-methionine site.

The protein belongs to the BMT2 family.

Its subcellular location is the nucleus. The protein resides in the nucleolus. It catalyses the reaction adenosine(2142) in 25S rRNA + S-adenosyl-L-methionine = N(1)-methyladenosine(2142) in 25S rRNA + S-adenosyl-L-homocysteine + H(+). S-adenosyl-L-methionine-dependent methyltransferase that specifically methylates the N(1) position of adenine 2142 in 25S rRNA. N(1)-methyladenine(2142) in 25S rRNA is present in helix 65, a region that accounts for most of the intersubunit surface of the large subunit. The polypeptide is 25S rRNA (adenine(2142)-N(1))-methyltransferase (Saccharomyces cerevisiae (strain ATCC 204508 / S288c) (Baker's yeast)).